Here is a 408-residue protein sequence, read N- to C-terminus: Protein SLX4IP (408 aa).

Glycyl lysine isopeptide (Lys-Gly) (interchain with G-Cter in SUMO2) cross-links involve residues K61 and K79. S130 carries the phosphoserine modification. Glycyl lysine isopeptide (Lys-Gly) (interchain with G-Cter in SUMO2) cross-links involve residues K167 and K176. Residues 173–226 (TETKSSVTSKSQTRRDTVETSSDSVIAEIARRRNDGQASSSPPSESMGQAKDSI) are disordered. Positions 208–219 (GQASSSPPSESM) are enriched in polar residues. S213 is modified (phosphoserine). Residues K239 and K242 each participate in a glycyl lysine isopeptide (Lys-Gly) (interchain with G-Cter in SUMO2) cross-link. Residues 243-255 (VNQTQPEDTSGQQ) are compositionally biased toward polar residues. Residues 243–313 (VNQTQPEDTS…DFDHHGRVSL (71 aa)) form a disordered region. Glycyl lysine isopeptide (Lys-Gly) (interchain with G-Cter in SUMO2) cross-links involve residues K256, K291, K347, K356, and K372. A disordered region spans residues 365–408 (LSSRHLMKNNPGQAQQTGLATNTERLSTIQNSPTKKRKKYERGH). Positions 374-397 (NPGQAQQTGLATNTERLSTIQNSP) are enriched in polar residues. The residue at position 392 (T392) is a Phosphothreonine. Positions 398 to 408 (TKKRKKYERGH) are enriched in basic residues. K399 is covalently cross-linked (Glycyl lysine isopeptide (Lys-Gly) (interchain with G-Cter in SUMO2)).

It belongs to the SLX4IP family. In terms of assembly, interacts with SLX4/BTBD12; subunit of different structure-specific endonucleases.

The sequence is that of Protein SLX4IP (SLX4IP) from Homo sapiens (Human).